We begin with the raw amino-acid sequence, 84 residues long: Large ribosomal subunit protein bL31B (84 aa).

Belongs to the bacterial ribosomal protein bL31 family. Type B subfamily. As to quaternary structure, part of the 50S ribosomal subunit.

This Streptomyces griseus subsp. griseus (strain JCM 4626 / CBS 651.72 / NBRC 13350 / KCC S-0626 / ISP 5235) protein is Large ribosomal subunit protein bL31B.